Here is a 126-residue protein sequence, read N- to C-terminus: Heavy metal-associated isoprenylated plant protein 14 (126 aa).

Residues 3–69 (AKNAVLQLSI…LCNTEIVSVD (67 aa)) form the HMA domain. The residue at position 123 (Cys-123) is a Cysteine methyl ester. Cys-123 is lipidated: S-farnesyl cysteine. A propeptide spans 124 to 126 (VIM) (removed in mature form).

The protein belongs to the HIPP family.

In terms of biological role, probable heavy-metal-binding protein. This Arabidopsis thaliana (Mouse-ear cress) protein is Heavy metal-associated isoprenylated plant protein 14.